The sequence spans 201 residues: Putative 3-methyladenine DNA glycosylase (201 aa).

This sequence belongs to the DNA glycosylase MPG family.

The polypeptide is Putative 3-methyladenine DNA glycosylase (Rhodopseudomonas palustris (strain HaA2)).